The chain runs to 239 residues: Sugar fermentation stimulation protein homolog (239 aa).

It belongs to the SfsA family.

In Rhizobium meliloti (strain 1021) (Ensifer meliloti), this protein is Sugar fermentation stimulation protein homolog.